The primary structure comprises 74 residues: UPF0346 protein BPUM_1890 (74 aa).

It belongs to the UPF0346 family.

The protein is UPF0346 protein BPUM_1890 of Bacillus pumilus (strain SAFR-032).